Here is a 460-residue protein sequence, read N- to C-terminus: Monocarboxylate transporter 12 (460 aa).

Topologically, residues 1-10 are cytoplasmic; the sequence is MTQEKRSLHK. 12 helical membrane passes run 11-31, 58-78, 86-106, 115-135, 148-168, 177-197, 246-266, 282-302, 329-349, 354-374, 376-396, and 406-426; these read TPPD…VTVC, AWIH…GSYV, VGII…SFAT, LGVL…AMVG, IAMS…QLLI, LLIL…MRPI, FIIL…PFVY, AFLM…FGWV, FLPI…FGYF, VALI…SSAL, VVFF…GWLV, and FLLS…AKII. Topologically, residues 427-460 are cytoplasmic; sequence NRIKKNPQATVVRSSDIKQEVWTNGDVSCLNAIS.

The protein belongs to the major facilitator superfamily. Monocarboxylate porter (TC 2.A.1.13) family.

The protein resides in the cell membrane. It localises to the basolateral cell membrane. It catalyses the reaction creatine(in) = creatine(out). The enzyme catalyses guanidinoacetate(in) = guanidinoacetate(out). Functionally, functions as a transporter for creatine and as well for its precursor guanidinoacetate. Transport of creatine and GAA is independent of resting membrane potential and extracellular Na(+), Cl(-), or pH. Contributes to the process of creatine biosynthesis and distribution. The polypeptide is Monocarboxylate transporter 12 (slc16a12) (Xenopus laevis (African clawed frog)).